A 455-amino-acid polypeptide reads, in one-letter code: Transcriptional regulatory protein FlbD (455 aa).

The region spanning 2-114 (RLLVVGKLNG…LIAAVLAAVT (113 aa)) is the Response regulatory domain. The Sigma-54 factor interaction domain maps to 120–349 (MVVRDPAMEQ…LENAMHRAVL (230 aa)). ATP-binding positions include 148–155 (GESGSGKE) and 211–220 (ADGGTLLLDE). Residues 416–435 (RTHAANILGISIRTLRNKLK) constitute a DNA-binding region (H-T-H motif).

It localises to the cytoplasm. Activation of sigma-54-dependent flagellar gene promoters and strong negative autoregulatory effects on its own promoter. The synthesis and function of FlbD in C.crescentus is controlled by an internal cell-cycle clock. The chain is Transcriptional regulatory protein FlbD (flbD) from Caulobacter vibrioides (strain ATCC 19089 / CIP 103742 / CB 15) (Caulobacter crescentus).